A 517-amino-acid chain; its full sequence is Aldehyde dehydrogenase X, mitochondrial (517 aa).

Residues 1–17 (MLRFLAPRLLSLQGRTA) constitute a mitochondrion transit peptide. An N6-acetyllysine modification is found at lysine 51. The residue at position 52 (lysine 52) is an N6-acetyllysine; alternate. Lysine 52 is subject to N6-succinyllysine; alternate. An N6-succinyllysine modification is found at lysine 81. 262-267 (GSTEVG) is a binding site for NAD(+). The active-site Proton acceptor is the glutamate 285. The active-site Nucleophile is the cysteine 319. Lysine 364, lysine 383, lysine 399, lysine 414, and lysine 426 each carry N6-acetyllysine; alternate. 5 positions are modified to N6-succinyllysine; alternate: lysine 364, lysine 383, lysine 399, lysine 414, and lysine 426. Residue lysine 429 is modified to N6-acetyllysine.

The protein belongs to the aldehyde dehydrogenase family. Homotetramer. In terms of tissue distribution, liver, testis and to a lesser extent in brain.

It localises to the mitochondrion matrix. The catalysed reaction is an aldehyde + NAD(+) + H2O = a carboxylate + NADH + 2 H(+). The protein operates within alcohol metabolism; ethanol degradation; acetate from ethanol: step 2/2. ALDHs play a major role in the detoxification of alcohol-derived acetaldehyde. They are involved in the metabolism of corticosteroids, biogenic amines, neurotransmitters, and lipid peroxidation. This chain is Aldehyde dehydrogenase X, mitochondrial (ALDH1B1), found in Homo sapiens (Human).